The chain runs to 717 residues: RNA helicase NPH-II (717 aa).

A Helicase ATP-binding domain is found at 193–384; that stretch reads FEIFISKKNC…IYFKNIVEIY (192 aa). An ATP-binding site is contributed by 206-213; that stretch reads GGTGIGKT. Positions 331–334 match the DEXH box motif; it reads DEIH. Positions 406–566 constitute a Helicase C-terminal domain; it reads ILKNYMPSVG…VFKYNNMDYY (161 aa).

The protein belongs to the DEAD box helicase family. DEAH subfamily. Monomer.

The protein localises to the virion. It carries out the reaction ATP + H2O = ADP + phosphate + H(+). Functionally, NTP-dependent helicase that catalyzes unidirectional unwinding of 3'tailed duplex RNAs and plays an important role during transcription of early mRNAs, presumably by preventing R-loop formation behind the elongating RNA polymerase. Might also play a role in the export of newly synthesized mRNA chains out of the core into the cytoplasm. Required for replication and propagation of viral particles. The sequence is that of RNA helicase NPH-II (NPH2) from Melanoplus sanguinipes (Migratory grasshopper).